Here is a 306-residue protein sequence, read N- to C-terminus: Hydroxypyruvate reductase (306 aa).

NAD(+) contacts are provided by residues 152–153, Asp172, 228–230, and Asp254; these read NI and TAR. Arg230 is an active-site residue. Glu259 is an active-site residue. His280 (proton donor) is an active-site residue. 280 to 283 contacts NAD(+); it reads HIGA.

It belongs to the D-isomer specific 2-hydroxyacid dehydrogenase family.

The enzyme catalyses (R)-glycerate + NAD(+) = 3-hydroxypyruvate + NADH + H(+). It catalyses the reaction (R)-glycerate + NADP(+) = 3-hydroxypyruvate + NADPH + H(+). Involved in the degradation of L-serine via 3-hydroxypyruvate. Catalyzes the non-reversible reduction of 3-hydroxypyruvate to yield D-glycerate. The protein is Hydroxypyruvate reductase of Thermotoga maritima (strain ATCC 43589 / DSM 3109 / JCM 10099 / NBRC 100826 / MSB8).